A 364-amino-acid chain; its full sequence is Carbamoyl phosphate synthase pyrimidine-specific small chain (364 aa).

The segment at 1–169 (MKRYLVLEDG…AYPNPATGPN (169 aa)) is CPSase. L-glutamine is bound by residues S45, G217, and G219. Residues 169-356 (NVVVVDFGLK…IDLMAANQAT (188 aa)) form the Glutamine amidotransferase type-1 domain. The active-site Nucleophile is C244. L-glutamine contacts are provided by L245, Q248, N286, G288, and Y289. Catalysis depends on residues H329 and D331.

This sequence belongs to the CarA family. As to quaternary structure, composed of two chains; the small (or glutamine) chain promotes the hydrolysis of glutamine to ammonia, which is used by the large (or ammonia) chain to synthesize carbamoyl phosphate. Tetramer of heterodimers (alpha,beta)4.

It catalyses the reaction hydrogencarbonate + L-glutamine + 2 ATP + H2O = carbamoyl phosphate + L-glutamate + 2 ADP + phosphate + 2 H(+). The catalysed reaction is L-glutamine + H2O = L-glutamate + NH4(+). It participates in pyrimidine metabolism; UMP biosynthesis via de novo pathway; (S)-dihydroorotate from bicarbonate: step 1/3. With respect to regulation, inhibited by pyrimidine. In terms of biological role, small subunit of the glutamine-dependent carbamoyl phosphate synthetase (CPSase). CPSase catalyzes the formation of carbamoyl phosphate from the ammonia moiety of glutamine, carbonate, and phosphate donated by ATP, constituting the first step of the biosynthetic pathway leading to pyrimidine nucleotides. The small subunit (glutamine amidotransferase) binds and cleaves glutamine to supply the large subunit with the substrate ammonia. This Lactiplantibacillus plantarum (strain ATCC BAA-793 / NCIMB 8826 / WCFS1) (Lactobacillus plantarum) protein is Carbamoyl phosphate synthase pyrimidine-specific small chain.